We begin with the raw amino-acid sequence, 214 residues long: Large ribosomal subunit protein uL6m (214 aa).

The N-terminal 16 residues, 1–16 (MSFIQRRLLSQTLFLR), are a transit peptide targeting the mitochondrion.

It belongs to the universal ribosomal protein uL6 family. In terms of assembly, component of the mitochondrial large ribosomal subunit (mt-LSU). Mature yeast 74S mitochondrial ribosomes consist of a small (37S) and a large (54S) subunit. The 37S small subunit contains a 15S ribosomal RNA (15S mt-rRNA) and 34 different proteins. The 54S large subunit contains a 21S rRNA (21S mt-rRNA) and 46 different proteins.

Its subcellular location is the mitochondrion. In terms of biological role, component of the mitochondrial ribosome (mitoribosome), a dedicated translation machinery responsible for the synthesis of mitochondrial genome-encoded proteins, including at least some of the essential transmembrane subunits of the mitochondrial respiratory chain. The mitoribosomes are attached to the mitochondrial inner membrane and translation products are cotranslationally integrated into the membrane. In Saccharomyces cerevisiae (strain ATCC 204508 / S288c) (Baker's yeast), this protein is Large ribosomal subunit protein uL6m (MRPL6).